Here is a 359-residue protein sequence, read N- to C-terminus: MFIKLSSTNSTSIFWLPIFFYNEPYWAQCAISSAELPFYMLSAYVVFVSCRIMLKIQLFHDNLMYIGVPMFGSWFLLIAGKLITILYRVRILNVESVKIHENWVFWTDEPEKMLNVQSLDGLVPLLVAGFLEIHFGFSVIFVGLAIVTERVIASMLIDNYEQSTSLLIPISFIIIYQFLAISISLGILFNILGLYVLNASWILCILIGTIMYYYIRKINTKWLQEMQNPNRKRVFTVSQQFQVRENLGAIAIGKRLVFVVLATIVVMGFGIVALVLEITVLFFMHFGENTLFCYPLYIFLVVMNGHPAWKQEFRKYFPKIKIFKKVRPGLVSVEIVEDQKKKLSLETDTYFRQLKSAWT.

Helical transmembrane passes span 29–49, 66–86, 127–147, 172–192, 195–215, 256–276, and 282–302; these read CAIS…VFVS, IGVP…ITIL, VAGF…LAIV, FIII…FNIL, YVLN…YYYI, LVFV…ALVL, and FFMH…FLVV.

Belongs to the nematode receptor-like protein sre family.

Its subcellular location is the membrane. This chain is Serpentine receptor class epsilon-26 (sre-26), found in Caenorhabditis elegans.